Reading from the N-terminus, the 207-residue chain is Large ribosomal subunit protein uL3c (207 aa).

Residues 128–148 are disordered; it reads FTRGPMTHGSKNHRAPGSIGM.

It belongs to the universal ribosomal protein uL3 family. Part of the 50S ribosomal subunit.

The protein resides in the plastid. Its subcellular location is the chloroplast. Functionally, one of the primary rRNA binding proteins, it binds directly near the 3'-end of the 23S rRNA, where it nucleates assembly of the 50S subunit. The polypeptide is Large ribosomal subunit protein uL3c (rpl3) (Trieres chinensis (Marine centric diatom)).